A 339-amino-acid polypeptide reads, in one-letter code: 5-dehydro-2-deoxygluconokinase (339 aa).

Belongs to the carbohydrate kinase PfkB family.

It catalyses the reaction 5-dehydro-2-deoxy-D-gluconate + ATP = 6-phospho-5-dehydro-2-deoxy-D-gluconate + ADP + H(+). The protein operates within polyol metabolism; myo-inositol degradation into acetyl-CoA; acetyl-CoA from myo-inositol: step 5/7. Its function is as follows. Catalyzes the phosphorylation of 5-dehydro-2-deoxy-D-gluconate (2-deoxy-5-keto-D-gluconate or DKG) to 6-phospho-5-dehydro-2-deoxy-D-gluconate (DKGP). The polypeptide is 5-dehydro-2-deoxygluconokinase (Clostridium tetani (strain Massachusetts / E88)).